The primary structure comprises 633 residues: Heterogeneous nuclear ribonucleoprotein R (633 aa).

The disordered stretch occupies residues 1 to 24; it reads MANQVNGNAVQLKEEEEPMDTSSV. Position 2 is an N-acetylalanine (Ala-2). Glycyl lysine isopeptide (Lys-Gly) (interchain with G-Cter in SUMO2) cross-links involve residues Lys-13 and Lys-171. RRM domains lie at 165–244, 246–328, and 341–411; these read TEVF…ISVA, NRLF…WADP, and KVLF…LAKP. Lys-359 is covalently cross-linked (Glycyl lysine isopeptide (Lys-Gly) (interchain with G-Cter in SUMO2)). Lys-366 bears the N6-acetyllysine mark. A Nuclear localization signal motif is present at residues 412 to 418; it reads PDKKRKE. The disordered stretch occupies residues 412-456; it reads PDKKRKERQAARQASRSTAYEDYYYHPPPRMPPPIRGRGRGGGRG. Positions 437–446 are enriched in pro residues; sequence HPPPRMPPPI. An RNA-binding RGG-box region spans residues 447 to 567; that stretch reads RGRGRGGGRG…SRGSRGNRGG (121 aa). A 1; approximate repeat occupies 462–471; the sequence is PDYYGYEDYY. The 3 X 11 AA approximate repeats of D-D-Y-Y-G-Y-D-Y-H-D-Y stretch occupies residues 462-497; the sequence is PDYYGYEDYYDDYYGYDYHDYRGGYEDPYYGYDDGY. Repeat unit 2 spans residues 472–482; sequence DDYYGYDYHDY. One copy of the 3; approximate repeat lies at 488–497; that stretch reads DPYYGYDDGY. Over residues 501–510 the composition is skewed to gly residues; the sequence is GRGGGRGGRG. Residues 501–633 are disordered; sequence GRGGGRGGRG…YQDTYGQQWK (133 aa). Pro residues predominate over residues 511–524; it reads APPPPRGRGAPPPR. A compositionally biased stretch (low complexity) spans 525-541; the sequence is GRAGYSQRGAPLGPPRG. A compositionally biased stretch (gly residues) spans 558 to 570; the sequence is SRGSRGNRGGNVG. A compositionally biased stretch (polar residues) spans 588-604; it reads TNNQQNWGSQPIAQQPL. Positions 605–621 are enriched in low complexity; it reads QQGGDYSGNYGYNNDNQ. Over residues 622-633 the composition is skewed to polar residues; that stretch reads EFYQDTYGQQWK.

In terms of assembly, identified in the spliceosome C complex. Identified in a IGF2BP1-dependent mRNP granule complex containing untranslated mRNAs. Interacts with GTPBP1.

It localises to the nucleus. Its subcellular location is the microsome. The protein localises to the nucleoplasm. The protein resides in the cytoplasm. Its function is as follows. Component of ribonucleosomes, which are complexes of at least 20 other different heterogeneous nuclear ribonucleoproteins (hnRNP). hnRNP play an important role in processing of precursor mRNA in the nucleus. The sequence is that of Heterogeneous nuclear ribonucleoprotein R (HNRNPR) from Homo sapiens (Human).